Consider the following 204-residue polypeptide: Large ribosomal subunit protein eL15 (204 aa).

This sequence belongs to the eukaryotic ribosomal protein eL15 family. As to quaternary structure, component of the large ribosomal subunit.

Its subcellular location is the cytoplasm. Component of the large ribosomal subunit. The ribosome is a large ribonucleoprotein complex responsible for the synthesis of proteins in the cell. This chain is Large ribosomal subunit protein eL15 (rpl15), found in Monopterus albus (Swamp eel).